We begin with the raw amino-acid sequence, 74 residues long: Kappa-stichotoxin-Shd5a (74 aa).

The N-terminal stretch at 1 to 22 (MKFQVIAAVLLIAFCLCVVVTA) is a signal peptide. A propeptide spanning residues 23–39 (RMELQDVEDVENGFQKR) is cleaved from the precursor. The ShKT domain occupies 42–74 (CIDTIPQSRCTAFQCKHSMKYRLSFCRKTCGTC). 3 cysteine pairs are disulfide-bonded: Cys42-Cys74, Cys51-Cys67, and Cys56-Cys71.

The protein belongs to the sea anemone type 1 potassium channel toxin family. Type 1a subfamily.

It is found in the secreted. The protein resides in the nematocyst. Inhibits voltage-gated potassium channels (Kv) with higher potency for Kv1.1/KCNA1 and Kv1.3/KCNA3. The chain is Kappa-stichotoxin-Shd5a from Stichodactyla haddoni (Saddle carpet anemone).